The following is a 428-amino-acid chain: MCLELDNNLSDYFKACTYAYYSDYENFIKYYDNEELFDEDDLNFHLCIGIRNSYNFAVKMENSGLKLTSGILSSISARYIMSNKVCDFNFKYLPSGIWYPNVPTKETCIYLLEKDPKYSLVIKTICVLLGWDDVCDKCDKICTEVCFRLSIIFNRRSFCEEDTIYNYKIHENKNILEKVEKDKYLLPETILRNKDTTLEIFFKYNYTSKQSNIEQIIDDMLYTYIDYSQNTEFGPMDCVSVDKSVYYNMVSYKPYLDININTVEFNFLNSAYVLKHHKEYPDDLCKKAVLNLLVNDIYDSNFVSLYRPFYFYTYKTLNKYMVQKLLIDFPRQRYAILVNYAIMNITEDLENYSPDIDLIRIAYASGSIEFYNIMMNKAKKEGGMCQHLDFENEKYIFKYHKYEDVDFDNLHKNNGHPLLLRATHLNFP.

N-linked (GlcNAc...) asparagine glycosylation is found at Asn-8, Asn-205, and Asn-344.

In terms of biological role, not known. In Kluyveromyces lactis (strain ATCC 8585 / CBS 2359 / DSM 70799 / NBRC 1267 / NRRL Y-1140 / WM37) (Yeast), this protein is RF4 protein (RF4).